Consider the following 466-residue polypeptide: ATP synthase subunit beta (466 aa).

152–159 lines the ATP pocket; it reads GGAGVGKT.

Belongs to the ATPase alpha/beta chains family. F-type ATPases have 2 components, CF(1) - the catalytic core - and CF(0) - the membrane proton channel. CF(1) has five subunits: alpha(3), beta(3), gamma(1), delta(1), epsilon(1). CF(0) has three main subunits: a(1), b(2) and c(9-12). The alpha and beta chains form an alternating ring which encloses part of the gamma chain. CF(1) is attached to CF(0) by a central stalk formed by the gamma and epsilon chains, while a peripheral stalk is formed by the delta and b chains.

It localises to the cell inner membrane. The catalysed reaction is ATP + H2O + 4 H(+)(in) = ADP + phosphate + 5 H(+)(out). Its function is as follows. Produces ATP from ADP in the presence of a proton gradient across the membrane. The catalytic sites are hosted primarily by the beta subunits. The protein is ATP synthase subunit beta of Helicobacter acinonychis (strain Sheeba).